Reading from the N-terminus, the 187-residue chain is Lysozyme C-like protein DDB_G0288143 (187 aa).

Positions 1–23 (MKVSNLISTITIASALCLSLTNA) are cleaved as a signal peptide. Cystine bridges form between cysteine 50–cysteine 125, cysteine 74–cysteine 82, and cysteine 78–cysteine 97. Glutamate 55 is an active-site residue. The interval 133 to 187 (QHGSHSSTSRDSSSSSSRDSTGTGYSSSGSGTSGSGSNSGQTGHFIPGQSGHGLN) is disordered. The segment covering 136–175 (SHSSTSRDSSSSSSRDSTGTGYSSSGSGTSGSGSNSGQTG) has biased composition (low complexity).

This sequence belongs to the glycosyl hydrolase 22 family.

This chain is Lysozyme C-like protein DDB_G0288143, found in Dictyostelium discoideum (Social amoeba).